The following is a 465-amino-acid chain: MKIVVSRGLDLSLKGAPKESGFCGKVDPTYVSVDLRPFAPLPLGVKVTPEDQVTAGSPLAEYKLFSGVFITSPVDGEVVEIRRGNKRALLEIVIKKKPGISQTKFSYDLQSLTQKDLLEVFKKEGLFALFKQRPFDIPALPTQSPRDVFINLADNRPFTPSVEKHLSLFSSKEDGYYIFVVGVQAIAKLFGLKPHIISTDRLTLPTQDLVSIAHLHTIDGPFPSGSPSTHIHHIARIRNERDVVFTISFQEVLSIGHLFLKGFVLGQQIVALAGSALPPSQRKYLITAKGASFSDLLPKDIFSSDEITLISGDPLTGRLCKKEENPCLGMRDHTITLLPNPKTRESFSFLRLGWNKLTVTRTYLSGFFKRKRVFMDMDTNMHGEKRPIIDAEIYERVSAIPVPVALIIKALETQNFEEACRLGLLEVAPEDFALPTFIDPSKTEMFSIVKESLLRYAKENVVTSS.

This sequence belongs to the NqrA family. In terms of assembly, composed of six subunits; NqrA, NqrB, NqrC, NqrD, NqrE and NqrF.

The enzyme catalyses a ubiquinone + n Na(+)(in) + NADH + H(+) = a ubiquinol + n Na(+)(out) + NAD(+). Functionally, NQR complex catalyzes the reduction of ubiquinone-1 to ubiquinol by two successive reactions, coupled with the transport of Na(+) ions from the cytoplasm to the periplasm. NqrA to NqrE are probably involved in the second step, the conversion of ubisemiquinone to ubiquinol. The protein is Na(+)-translocating NADH-quinone reductase subunit A of Chlamydia trachomatis serovar A (strain ATCC VR-571B / DSM 19440 / HAR-13).